The chain runs to 89 residues: uncharacterized protein (89 aa).

Residues 1 to 19 (MIVRTLLIAAALLGGTAQA) form the signal peptide.

The protein resides in the secreted. This is an uncharacterized protein from Pseudomonas aeruginosa (strain UCBPP-PA14).